The following is a 322-amino-acid chain: 5'-AMP-activated protein kinase subunit gamma (322 aa).

CBS domains follow at residues 37-97, 118-181, 194-253, and 262-322; these read VSYR…NPDK, VDQL…CRET, ITQD…YNDL, and MRRS…LGSN. ADP-binding positions include isoleucine 42, arginine 146, 166–169, and threonine 195; that span reads TQYR. Residues threonine 195, lysine 200, and 221-222 contribute to the AMP site; that span reads SS. Residues threonine 195, lysine 200, and 221-222 each bind ATP; that span reads SS. ADP contacts are provided by residues 221–222, 291–293, and 309–312; these read SS, RVH, and TLSD. AMP is bound at residue 309–312; sequence TLSD. ATP is bound at residue 309 to 312; that stretch reads TLSD.

It belongs to the 5'-AMP-activated protein kinase gamma subunit family. In terms of assembly, AMPK is a heterotrimer of an alpha catalytic subunit (SNF1), a beta (SIP1, SIP2 or GAL83) and a gamma non-catalytic subunits (SNF4). Note=Interaction between SNF1 and SNF4 is inhibited by high levels of glucose.

The protein resides in the nucleus. It localises to the cytoplasm. In terms of biological role, adenine nucleotides-binding subunit gamma of AMP-activated protein kinase (AMPK), an energy sensor protein kinase that plays a key role in regulating cellular energy metabolism. In response to reduction of intracellular ATP levels, AMPK activates energy-producing pathways and inhibits energy-consuming processes: inhibits protein, carbohydrate and lipid biosynthesis, as well as cell growth and proliferation. AMPK acts via direct phosphorylation of metabolic enzymes, and by longer-term effects via phosphorylation of transcription regulators. Gamma non-catalytic subunit mediates binding to AMP, ADP and ATP, leading to activate or inhibit AMPK: AMP-binding results in allosteric activation of alpha catalytic subunit (SNF1) both by inducing phosphorylation and preventing dephosphorylation of catalytic subunits. The polypeptide is 5'-AMP-activated protein kinase subunit gamma (SNF4) (Saccharomyces cerevisiae (strain ATCC 204508 / S288c) (Baker's yeast)).